Reading from the N-terminus, the 161-residue chain is Globin CTT-IX (161 aa).

A signal peptide spans 1 to 16 (MKFFIVLALCIVGAIA). A Globin domain is found at 18–161 (PVSSDQANAI…NIFGMIFAHL (144 aa)). Heme b is bound by residues His76 and His111.

This sequence belongs to the globin family. In terms of assembly, homodimer.

This is Globin CTT-IX (CTT-9) from Chironomus thummi thummi (Midge).